The sequence spans 750 residues: Cullin-5 (750 aa).

Residues arginine 678 to aspartate 739 form the Cullin neddylation domain. Lysine 691 participates in a covalent cross-link: Glycyl lysine isopeptide (Lys-Gly) (interchain with G-Cter in NEDD8).

This sequence belongs to the cullin family. Post-translationally, neddylated; which enhances the ubiquitination activity of SCF-like complex.

It functions in the pathway protein modification; protein ubiquitination. Probable core component of cullin-based SCF-like E3 ubiquitin-protein ligase complexes which mediate the ubiquitination and subsequent proteasomal degradation of target proteins. The E3 ubiquitin-protein ligase activity of the complex is dependent on the neddylation of the cullin subunit. The sequence is that of Cullin-5 (culE) from Dictyostelium discoideum (Social amoeba).